The chain runs to 222 residues: Urease accessory protein UreF (222 aa).

This sequence belongs to the UreF family. As to quaternary structure, ureD, UreF and UreG form a complex that acts as a GTP-hydrolysis-dependent molecular chaperone, activating the urease apoprotein by helping to assemble the nickel containing metallocenter of UreC. The UreE protein probably delivers the nickel.

The protein resides in the cytoplasm. Functionally, required for maturation of urease via the functional incorporation of the urease nickel metallocenter. This Hahella chejuensis (strain KCTC 2396) protein is Urease accessory protein UreF.